Consider the following 145-residue polypeptide: MDVLVINGPNLNLLGKRQPHIYGNKTIEDINNELHKIAHNNNVTIDFFQSNHEGEIVDKIQQSAAKIIIINPAAYTHTSIAIRDAFLAINKPFIEIHLSNIYNREEFRTKSLLSDIAYGCIFGFGPNGYTLALIEAINYINMKGE.

Y22 (proton acceptor) is an active-site residue. Substrate-binding residues include N71, H77, and D84. H97 (proton donor) is an active-site residue. Residues 98-99 and R108 each bind substrate; that span reads LS.

This sequence belongs to the type-II 3-dehydroquinase family. As to quaternary structure, homododecamer.

The catalysed reaction is 3-dehydroquinate = 3-dehydroshikimate + H2O. It participates in metabolic intermediate biosynthesis; chorismate biosynthesis; chorismate from D-erythrose 4-phosphate and phosphoenolpyruvate: step 3/7. Functionally, catalyzes a trans-dehydration via an enolate intermediate. The sequence is that of 3-dehydroquinate dehydratase from Francisella philomiragia subsp. philomiragia (strain ATCC 25017 / CCUG 19701 / FSC 153 / O#319-036).